The primary structure comprises 182 residues: Crossover junction endodeoxyribonuclease RuvC (182 aa).

Active-site residues include D7, E69, and D141. D7, E69, and D141 together coordinate Mg(2+).

Belongs to the RuvC family. As to quaternary structure, homodimer which binds Holliday junction (HJ) DNA. The HJ becomes 2-fold symmetrical on binding to RuvC with unstacked arms; it has a different conformation from HJ DNA in complex with RuvA. In the full resolvosome a probable DNA-RuvA(4)-RuvB(12)-RuvC(2) complex forms which resolves the HJ. The cofactor is Mg(2+).

It is found in the cytoplasm. It catalyses the reaction Endonucleolytic cleavage at a junction such as a reciprocal single-stranded crossover between two homologous DNA duplexes (Holliday junction).. Functionally, the RuvA-RuvB-RuvC complex processes Holliday junction (HJ) DNA during genetic recombination and DNA repair. Endonuclease that resolves HJ intermediates. Cleaves cruciform DNA by making single-stranded nicks across the HJ at symmetrical positions within the homologous arms, yielding a 5'-phosphate and a 3'-hydroxyl group; requires a central core of homology in the junction. The consensus cleavage sequence is 5'-(A/T)TT(C/G)-3'. Cleavage occurs on the 3'-side of the TT dinucleotide at the point of strand exchange. HJ branch migration catalyzed by RuvA-RuvB allows RuvC to scan DNA until it finds its consensus sequence, where it cleaves and resolves the cruciform DNA. The chain is Crossover junction endodeoxyribonuclease RuvC from Variovorax paradoxus (strain S110).